Here is a 1332-residue protein sequence, read N- to C-terminus: SAGA complex subunit SPT7 (1332 aa).

Phosphothreonine; by ATM or ATR is present on threonine 78. 3 disordered regions span residues 80-118 (EEEHHGAVSPAVDTRSDDVSSQTIKDNNNTNTNTSISNE), 209-268 (VEEK…ISSS), and 331-384 (IEKG…PKQS). Position 88 is a phosphoserine (serine 88). Low complexity predominate over residues 106–118 (NNNTNTNTSISNE). Residues 217–233 (IGKNEKPQNKEGISKFA) show a composition bias toward basic and acidic residues. The span at 234 to 249 (EDEDYDDEDENYDEDS) shows a compositional bias: acidic residues. Over residues 250–260 (TDVKNVDDPPK) the composition is skewed to basic and acidic residues. The segment covering 345–360 (AATDEQDRENTNDEPD) has biased composition (acidic residues). Over residues 362 to 376 (NQKLPTPEGSTFSDT) the composition is skewed to polar residues. The 107-residue stretch at 440–546 (IGQEELYEAC…KKSLQLIRMI (107 aa)) folds into the Bromo domain. Acidic residues predominate over residues 566–578 (KDKDYELDEEEEV). Disordered regions lie at residues 566-724 (KDKD…YLLE) and 1286-1332 (GAEN…RLNQ). Composition is skewed to basic and acidic residues over residues 593–634 (LAKE…KDKT) and 644–697 (NVNK…KEAG). Over residues 698-716 (ENNEEEEDDDDEDEDEDMV) the composition is skewed to acidic residues. Position 1293 is a phosphoserine (serine 1293). The segment covering 1316–1332 (NMGSNSSFSLSLPRLNQ) has biased composition (polar residues).

In terms of assembly, component of the 1.8 MDa SAGA (Spt-Ada-Gcn5 acetyltransferase) complex, which is composed of 19 subunits TRA1, SPT7, TAF5, NGG1/ADA3, SGF73, SPT20/ADA5, SPT8, TAF12, TAF6, HFI1/ADA1, UBP8, GCN5, ADA2, SPT3, SGF29, TAF10, TAF9, SGF11 and SUS1. The SAGA complex is composed of 4 modules, namely the HAT (histone acetyltransferase) module (GCN5, ADA2, NGG1/ADA3 and SGF29), the DUB (deubiquitinating) module (UBP8, SGF11, SGF73 and SUS1), the core or TAF (TBP-associated factor) module (TAF5, TAF6, TAF9, TAF10 and TAF12), and the Tra1 or SPT (Suppressor of Ty) module (TRA1, HFI1/ADA1, SPT3, SPT7, SPT8 and SPT20/ADA5). The Tra1/SPT module binds activators, the core module recruits TBP (TATA-binding protein), the HAT module contains the histone H3 acetyltransferase GCN5, and the DUB module comprises the histone H2B deubiquitinase UBP8. Also identified in an altered form of SAGA, named SALSA (SAGA altered, Spt8 absent) or SLIK (SAGA-like) complex, which contains a C-terminal truncated form of SPT7 and is missing SPT8. However, it has been shown that the SAGA and SAGA-like SALSA/SLIK transcriptional coactivators are structurally and biochemically equivalent. Identified in the Ada.spt complex with NGG1/ADA3 and TRA1. In terms of processing, protease PEP4 directly cleaves the C-terminus of SPT7(SAGA) to form SPT7(SLIK) within the SAGA complex in the nucleus.

It is found in the nucleus. Component of the transcription coactivator SAGA complex. SAGA acts as a general cofactor required for essentially all RNA polymerase II transcription. At the promoters, SAGA is required for transcription pre-initiation complex (PIC) recruitment. It influences RNA polymerase II transcriptional activity through different activities such as TBP interaction (via core/TAF module) and promoter selectivity, interaction with transcription activators (via Tra1/SPT module), and chromatin modification through histone acetylation (via HAT module) and deubiquitination (via DUB module). SAGA preferentially acetylates histones H3 (to form H3K9ac, H3K14ac, H3K18ac and H3K23ac) and H2B and deubiquitinates histone H2B. SAGA interacts with DNA via upstream activating sequences (UASs). Also identified in a modified version of SAGA named SALSA or SLIK. The cleavage of SPT7 and the absence of the SPT8 subunit in SLIK neither drive any major conformational differences in its structure compared with SAGA, nor significantly affect HAT, DUB, or DNA-binding activities. In Saccharomyces cerevisiae (strain ATCC 204508 / S288c) (Baker's yeast), this protein is SAGA complex subunit SPT7 (SPT7).